Reading from the N-terminus, the 196-residue chain is Large ribosomal subunit protein eL15 (196 aa).

Disordered regions lie at residues 72–93 (SARKRRHKAGRRSKRQGVTRIT) and 163–196 (GLTGAGRRNRGLSGKGKGSEKTRPSLRSNGGKGK).

It belongs to the eukaryotic ribosomal protein eL15 family. Part of the 50S ribosomal subunit. Interacts with protein L7Ae and weakly with L44e.

This Haloarcula marismortui (strain ATCC 43049 / DSM 3752 / JCM 8966 / VKM B-1809) (Halobacterium marismortui) protein is Large ribosomal subunit protein eL15 (rpl15e).